Consider the following 655-residue polypeptide: Squalene-tetrahymanol cyclase THC1 (655 aa).

A signal peptide spans 1 to 20 (MKKILIGLIIGLFLFSSVNA). Residues Asn-23, Asn-44, Asn-69, and Asn-77 are each glycosylated (N-linked (GlcNAc...) asparagine). The Proton donor role is filled by Asp-373. PFTB repeat units lie at residues 393–435 (IPET…GIAN) and 515–562 (VQNS…GLLA).

It belongs to the terpene cyclase/mutase family.

It localises to the membrane. It carries out the reaction tetrahymanol = squalene + H2O. 2,3-iminosqualene and N,N-dimethyldodecylamine~N-oxlde are effective inhibitors with IC(50) values of 50 and 30 nM, respectively. Functionally, squalene cyclase that catalyzes the oxygen-independent cyclization of squalene into tetrahymanol, a triterpenoid sterol with five cyclohexyl rings that is involved in membrane integrity, permeability and fluidity. This chain is Squalene-tetrahymanol cyclase THC1, found in Tetrahymena thermophila (strain SB210).